Here is a 290-residue protein sequence, read N- to C-terminus: tRNA (adenine(58)-N(1))-methyltransferase catalytic subunit TRMT61A (290 aa).

Ser-2 is modified (N-acetylserine). 5 substrate regions span residues 20–22 (LGH), 35–42 (QTQTRHGV), 64–65 (GW), 85–89 (QILYS), and 110–117 (SGTGSGSV). Residues Leu-87, 114-116 (SGS), Glu-135, Arg-140, 163-164 (DV), and Asp-181 contribute to the S-adenosyl-L-methionine site. 2 substrate regions span residues 180–183 (LDIP) and 205–212 (SFSPCIEQ). Residue Thr-279 coordinates substrate.

It belongs to the class I-like SAM-binding methyltransferase superfamily. TRM61 family. Heterotetramer; composed of two copies of TRMT6 and two copies of TRMT61A.

The protein localises to the nucleus. The enzyme catalyses adenosine(58) in tRNA + S-adenosyl-L-methionine = N(1)-methyladenosine(58) in tRNA + S-adenosyl-L-homocysteine + H(+). It catalyses the reaction an adenosine in mRNA + S-adenosyl-L-methionine = an N(1)-methyladenosine in mRNA + S-adenosyl-L-homocysteine + H(+). Functionally, catalytic subunit of tRNA (adenine-N(1)-)-methyltransferase, which catalyzes the formation of N(1)-methyladenine at position 58 (m1A58) in initiator methionyl-tRNA. Catalytic subunit of mRNA N(1)-methyltransferase complex, which mediates methylation of adenosine residues at the N(1) position of a small subset of mRNAs: N(1) methylation takes place in tRNA T-loop-like structures of mRNAs and is only present at low stoichiometries. This Rattus norvegicus (Rat) protein is tRNA (adenine(58)-N(1))-methyltransferase catalytic subunit TRMT61A (Trmt61a).